Reading from the N-terminus, the 429-residue chain is Adenylosuccinate synthetase (429 aa).

Residues 12–18 (GDEGKGK) and 40–42 (GHT) each bind GTP. Asp-13 serves as the catalytic Proton acceptor. Positions 13 and 40 each coordinate Mg(2+). Residues 13–16 (DEGK), 38–41 (NAGH), Thr-129, Arg-143, Gln-223, Thr-238, and Arg-302 each bind IMP. Catalysis depends on His-41, which acts as the Proton donor. 298–304 (VVTGRKR) serves as a coordination point for substrate. GTP contacts are provided by residues Arg-304, 330 to 332 (KLD), and 412 to 414 (STS).

It belongs to the adenylosuccinate synthetase family. As to quaternary structure, homodimer. Requires Mg(2+) as cofactor.

It is found in the cytoplasm. It catalyses the reaction IMP + L-aspartate + GTP = N(6)-(1,2-dicarboxyethyl)-AMP + GDP + phosphate + 2 H(+). Its pathway is purine metabolism; AMP biosynthesis via de novo pathway; AMP from IMP: step 1/2. Functionally, plays an important role in the de novo pathway of purine nucleotide biosynthesis. Catalyzes the first committed step in the biosynthesis of AMP from IMP. The polypeptide is Adenylosuccinate synthetase (Maricaulis maris (strain MCS10) (Caulobacter maris)).